Consider the following 101-residue polypeptide: NADH-quinone oxidoreductase subunit K (101 aa).

The next 3 helical transmembrane spans lie at 5–25 (PNWY…GVLF), 30–50 (IVVL…LVTF), and 62–82 (LVFF…AIVI).

It belongs to the complex I subunit 4L family. In terms of assembly, NDH-1 is composed of 14 different subunits. Subunits NuoA, H, J, K, L, M, N constitute the membrane sector of the complex.

It is found in the cell inner membrane. It catalyses the reaction a quinone + NADH + 5 H(+)(in) = a quinol + NAD(+) + 4 H(+)(out). NDH-1 shuttles electrons from NADH, via FMN and iron-sulfur (Fe-S) centers, to quinones in the respiratory chain. The immediate electron acceptor for the enzyme in this species is believed to be a menaquinone. Couples the redox reaction to proton translocation (for every two electrons transferred, four hydrogen ions are translocated across the cytoplasmic membrane), and thus conserves the redox energy in a proton gradient. The protein is NADH-quinone oxidoreductase subunit K of Salinibacter ruber (strain DSM 13855 / M31).